The primary structure comprises 136 residues: Large ribosomal subunit protein bL21 (136 aa).

The segment at 107 to 136 (RAAADRKTAPKRASAKAAADQTTAAQATAE) is disordered. Residues 121–136 (AKAAADQTTAAQATAE) show a composition bias toward low complexity.

Belongs to the bacterial ribosomal protein bL21 family. In terms of assembly, part of the 50S ribosomal subunit. Contacts protein L20.

This protein binds to 23S rRNA in the presence of protein L20. The polypeptide is Large ribosomal subunit protein bL21 (Acidothermus cellulolyticus (strain ATCC 43068 / DSM 8971 / 11B)).